The sequence spans 476 residues: Ribulose bisphosphate carboxylase large chain (476 aa).

The propeptide occupies 1 to 2 (MS). P3 is modified (N-acetylproline). N6,N6,N6-trimethyllysine is present on K14. Substrate is bound by residues N123 and T173. The active-site Proton acceptor is the K175. K177 contacts substrate. Residues K201, D203, and E204 each coordinate Mg(2+). K201 bears the N6-carboxylysine mark. The active-site Proton acceptor is the H294. Substrate-binding residues include R295, H327, and S379.

This sequence belongs to the RuBisCO large chain family. Type I subfamily. As to quaternary structure, heterohexadecamer of 8 large chains and 8 small chains; disulfide-linked. The disulfide link is formed within the large subunit homodimers. Mg(2+) serves as cofactor. The disulfide bond which can form in the large chain dimeric partners within the hexadecamer appears to be associated with oxidative stress and protein turnover.

It is found in the plastid. The protein localises to the chloroplast. The enzyme catalyses 2 (2R)-3-phosphoglycerate + 2 H(+) = D-ribulose 1,5-bisphosphate + CO2 + H2O. The catalysed reaction is D-ribulose 1,5-bisphosphate + O2 = 2-phosphoglycolate + (2R)-3-phosphoglycerate + 2 H(+). In terms of biological role, ruBisCO catalyzes two reactions: the carboxylation of D-ribulose 1,5-bisphosphate, the primary event in carbon dioxide fixation, as well as the oxidative fragmentation of the pentose substrate in the photorespiration process. Both reactions occur simultaneously and in competition at the same active site. The sequence is that of Ribulose bisphosphate carboxylase large chain from Liriodendron tulipifera (Tuliptree).